The chain runs to 928 residues: Nitrogen network kinase 1 (928 aa).

Positions 1-12 (MFTSQRQLRQNG) are enriched in polar residues. Disordered stretches follow at residues 1 to 43 (MFTS…SYGR) and 81 to 118 (HEHPSRSTLVQLQTRSQPDDVASSQVNPEGGTDDLELG). Positions 13–29 (SPMSSSRSSQHSSGTAS) are enriched in low complexity. Polar residues-rich tracts occupy residues 30–40 (PISDSPASNRS) and 86–107 (RSTLVQLQTRSQPDDVASSQVN). Residues Ser-178 and Ser-179 each carry the phosphoserine modification. The interval 374 to 394 (ANDDNINSRNTPNNSNDTYVN) is disordered. Residues 375–391 (NDDNINSRNTPNNSNDT) show a composition bias toward low complexity. Phosphoserine is present on residues Ser-405 and Ser-426. One can recognise a Protein kinase domain in the interval 449-912 (HRLGKIIGFG…WKLKRIEEVL (464 aa)). ATP is bound by residues 455–463 (IGFGAWGII) and Lys-478. Catalysis depends on Asp-580, which acts as the Proton acceptor. Disordered stretches follow at residues 670 to 741 (ENRK…KYIG) and 767 to 813 (YDSP…SGSS). The span at 683–696 (VSSSSHSLKHLNQP) shows a compositional bias: polar residues. Ser-737 is modified (phosphoserine). Tyr-739 is subject to Phosphotyrosine. The span at 769 to 813 (SPDSSQSEISAASSSSSNLSSLSSSTKASAVTNSGVTTSSPSGSS) shows a compositional bias: low complexity.

The protein belongs to the protein kinase superfamily. Ser/Thr protein kinase family. As to quaternary structure, interacts with URE2 and GDH2. Also interacts with the TORC1 kinase complex.

The protein resides in the cytoplasm. The catalysed reaction is L-seryl-[protein] + ATP = O-phospho-L-seryl-[protein] + ADP + H(+). It catalyses the reaction L-threonyl-[protein] + ATP = O-phospho-L-threonyl-[protein] + ADP + H(+). Its function is as follows. Serine/threonine-protein kinase involved in the phosphorylation of the NAD(+)-dependent glutamate dehydrogenase GDH2. When overexpressed, confers hypersensitivity to rapamycin and induces rapid nuclear accumulation of GLN3 to activate the transcription of nitrogen-regulated genes. This chain is Nitrogen network kinase 1 (NNK1), found in Saccharomyces cerevisiae (strain ATCC 204508 / S288c) (Baker's yeast).